The following is a 158-amino-acid chain: NAD(P)H-quinone oxidoreductase subunit N (158 aa).

Belongs to the complex I NdhN subunit family. In terms of assembly, NDH-1 can be composed of about 15 different subunits; different subcomplexes with different compositions have been identified which probably have different functions.

The protein resides in the cellular thylakoid membrane. It catalyses the reaction a plastoquinone + NADH + (n+1) H(+)(in) = a plastoquinol + NAD(+) + n H(+)(out). The enzyme catalyses a plastoquinone + NADPH + (n+1) H(+)(in) = a plastoquinol + NADP(+) + n H(+)(out). In terms of biological role, NDH-1 shuttles electrons from an unknown electron donor, via FMN and iron-sulfur (Fe-S) centers, to quinones in the respiratory and/or the photosynthetic chain. The immediate electron acceptor for the enzyme in this species is believed to be plastoquinone. Couples the redox reaction to proton translocation, and thus conserves the redox energy in a proton gradient. Cyanobacterial NDH-1 also plays a role in inorganic carbon-concentration. The sequence is that of NAD(P)H-quinone oxidoreductase subunit N from Prochlorococcus marinus (strain MIT 9312).